Consider the following 37-residue polypeptide: Large ribosomal subunit protein bL36c (37 aa).

This sequence belongs to the bacterial ribosomal protein bL36 family.

It is found in the plastid. The protein resides in the chloroplast. The sequence is that of Large ribosomal subunit protein bL36c from Thalassiosira pseudonana (Marine diatom).